The primary structure comprises 215 residues: Probable transaldolase (215 aa).

Catalysis depends on Lys83, which acts as the Schiff-base intermediate with substrate.

This sequence belongs to the transaldolase family. Type 3B subfamily.

Its subcellular location is the cytoplasm. The enzyme catalyses D-sedoheptulose 7-phosphate + D-glyceraldehyde 3-phosphate = D-erythrose 4-phosphate + beta-D-fructose 6-phosphate. The protein operates within carbohydrate degradation; pentose phosphate pathway; D-glyceraldehyde 3-phosphate and beta-D-fructose 6-phosphate from D-ribose 5-phosphate and D-xylulose 5-phosphate (non-oxidative stage): step 2/3. In terms of biological role, transaldolase is important for the balance of metabolites in the pentose-phosphate pathway. The sequence is that of Probable transaldolase from Methanococcus vannielii (strain ATCC 35089 / DSM 1224 / JCM 13029 / OCM 148 / SB).